Here is a 210-residue protein sequence, read N- to C-terminus: Protein DrgA (210 aa).

It belongs to the nitroreductase family. FMN serves as cofactor.

Functionally, controls resistance to the herbicide Dinoseb and metronidazole. Involved in detoxification of Dinoseb via the reduction of the nitro group(s) and this process is accompanied by the formation of toxic superoxide anions. The chain is Protein DrgA (drgA) from Synechocystis sp. (strain ATCC 27184 / PCC 6803 / Kazusa).